Consider the following 296-residue polypeptide: Glycine--tRNA ligase alpha subunit (296 aa).

The protein belongs to the class-II aminoacyl-tRNA synthetase family. In terms of assembly, tetramer of two alpha and two beta subunits.

The protein localises to the cytoplasm. It catalyses the reaction tRNA(Gly) + glycine + ATP = glycyl-tRNA(Gly) + AMP + diphosphate. This is Glycine--tRNA ligase alpha subunit from Francisella philomiragia subsp. philomiragia (strain ATCC 25017 / CCUG 19701 / FSC 153 / O#319-036).